The primary structure comprises 182 residues: Oligoribonuclease (182 aa).

Residues 8–171 (LLWLDMEMTG…ADIYESIDEL (164 aa)) form the Exonuclease domain. Tyr-129 is a catalytic residue.

Belongs to the oligoribonuclease family.

Its subcellular location is the cytoplasm. In terms of biological role, 3'-to-5' exoribonuclease specific for small oligoribonucleotides. The protein is Oligoribonuclease of Thiobacillus denitrificans (strain ATCC 25259 / T1).